The chain runs to 277 residues: 3-methyl-2-oxobutanoate hydroxymethyltransferase (277 aa).

Mg(2+) contacts are provided by Asp53 and Asp96. 3-methyl-2-oxobutanoate-binding positions include 53–54, Asp96, and Lys126; that span reads DS. Glu128 is a Mg(2+) binding site. Catalysis depends on Glu195, which acts as the Proton acceptor.

It belongs to the PanB family. In terms of assembly, homodecamer; pentamer of dimers. Requires Mg(2+) as cofactor.

The protein resides in the cytoplasm. The enzyme catalyses 3-methyl-2-oxobutanoate + (6R)-5,10-methylene-5,6,7,8-tetrahydrofolate + H2O = 2-dehydropantoate + (6S)-5,6,7,8-tetrahydrofolate. The protein operates within cofactor biosynthesis; (R)-pantothenate biosynthesis; (R)-pantoate from 3-methyl-2-oxobutanoate: step 1/2. Catalyzes the reversible reaction in which hydroxymethyl group from 5,10-methylenetetrahydrofolate is transferred onto alpha-ketoisovalerate to form ketopantoate. The protein is 3-methyl-2-oxobutanoate hydroxymethyltransferase of Chlorobium luteolum (strain DSM 273 / BCRC 81028 / 2530) (Pelodictyon luteolum).